The chain runs to 286 residues: 3-methyl-2-oxobutanoate hydroxymethyltransferase (286 aa).

2 residues coordinate Mg(2+): Asp67 and Asp106. 3-methyl-2-oxobutanoate-binding positions include 67–68, Asp106, and Lys136; that span reads DS. Glu138 contributes to the Mg(2+) binding site. Residue Glu204 is the Proton acceptor of the active site.

Belongs to the PanB family. As to quaternary structure, homodecamer; pentamer of dimers. The cofactor is Mg(2+).

The protein resides in the cytoplasm. It catalyses the reaction 3-methyl-2-oxobutanoate + (6R)-5,10-methylene-5,6,7,8-tetrahydrofolate + H2O = 2-dehydropantoate + (6S)-5,6,7,8-tetrahydrofolate. It functions in the pathway cofactor biosynthesis; (R)-pantothenate biosynthesis; (R)-pantoate from 3-methyl-2-oxobutanoate: step 1/2. Its function is as follows. Catalyzes the reversible reaction in which hydroxymethyl group from 5,10-methylenetetrahydrofolate is transferred onto alpha-ketoisovalerate to form ketopantoate. The sequence is that of 3-methyl-2-oxobutanoate hydroxymethyltransferase from Mycobacterium leprae (strain TN).